The chain runs to 122 residues: Large ribosomal subunit protein uL14 (122 aa).

It belongs to the universal ribosomal protein uL14 family. Part of the 50S ribosomal subunit. Forms a cluster with proteins L3 and L19. In the 70S ribosome, L14 and L19 interact and together make contacts with the 16S rRNA in bridges B5 and B8.

Binds to 23S rRNA. Forms part of two intersubunit bridges in the 70S ribosome. This is Large ribosomal subunit protein uL14 from Lysinibacillus sphaericus (strain C3-41).